Here is a 203-residue protein sequence, read N- to C-terminus: FMN-dependent NADH:quinone oxidoreductase 3 (203 aa).

Residues serine 9, 15-17, 95-98, and 139-142 contribute to the FMN site; these read SAS, MYNF, and TAGG.

The protein belongs to the azoreductase type 1 family. As to quaternary structure, homodimer. FMN is required as a cofactor.

The catalysed reaction is 2 a quinone + NADH + H(+) = 2 a 1,4-benzosemiquinone + NAD(+). The enzyme catalyses N,N-dimethyl-1,4-phenylenediamine + anthranilate + 2 NAD(+) = 2-(4-dimethylaminophenyl)diazenylbenzoate + 2 NADH + 2 H(+). Its function is as follows. Quinone reductase that provides resistance to thiol-specific stress caused by electrophilic quinones. Also exhibits azoreductase activity. Catalyzes the reductive cleavage of the azo bond in aromatic azo compounds to the corresponding amines. In Pseudomonas fluorescens (strain Pf0-1), this protein is FMN-dependent NADH:quinone oxidoreductase 3.